Consider the following 488-residue polypeptide: Malonate-semialdehyde dehydrogenase 1 (488 aa).

Positions 156, 180, 183, 184, 233, and 255 each coordinate NAD(+). The Nucleophile role is filled by Cys-288. Glu-387 is an NAD(+) binding site.

This sequence belongs to the aldehyde dehydrogenase family. IolA subfamily. Homotetramer.

The catalysed reaction is 3-oxopropanoate + NAD(+) + CoA + H2O = hydrogencarbonate + acetyl-CoA + NADH + H(+). The enzyme catalyses 2-methyl-3-oxopropanoate + NAD(+) + CoA + H2O = propanoyl-CoA + hydrogencarbonate + NADH + H(+). It functions in the pathway polyol metabolism; myo-inositol degradation into acetyl-CoA; acetyl-CoA from myo-inositol: step 7/7. Functionally, catalyzes the oxidation of malonate semialdehyde (MSA) and methylmalonate semialdehyde (MMSA) into acetyl-CoA and propanoyl-CoA, respectively. Is involved in a myo-inositol catabolic pathway. Bicarbonate, and not CO2, is the end-product of the enzymatic reaction. In Geobacillus kaustophilus (strain HTA426), this protein is Malonate-semialdehyde dehydrogenase 1.